We begin with the raw amino-acid sequence, 188 residues long: Ribosome-recycling factor (188 aa).

It belongs to the RRF family.

It is found in the cytoplasm. In terms of biological role, responsible for the release of ribosomes from messenger RNA at the termination of protein biosynthesis. May increase the efficiency of translation by recycling ribosomes from one round of translation to another. This Caulobacter sp. (strain K31) protein is Ribosome-recycling factor.